The sequence spans 200 residues: Guanylyl cyclase-activating protein 2 (200 aa).

Residue G2 is the site of N-myristoyl glycine attachment. 4 consecutive EF-hand domains span residues 14-31 (GEID…FVME), 53-88 (EASQ…VLRG), 89-124 (TLEH…IYQL), and 141-176 (TPEE…DKWV). The Ca(2+) site is built by D66, N68, D70, T72, E77, D102, D104, N106, C108, E113, D154, N156, D158, Q160, and E165.

The N-terminus is blocked. As to expression, in the retina, it is expressed in cone and rod photoreceptor cells.

It localises to the cell membrane. The protein localises to the photoreceptor inner segment. The protein resides in the cell projection. It is found in the cilium. Its subcellular location is the photoreceptor outer segment. Stimulates two retinal guanylyl cyclases (GCs) GUCY2D and GUCY2F when free calcium ions concentration is low, and inhibits GUCY2D and GUCY2F when free calcium ions concentration is elevated. This Ca(2+)-sensitive regulation of GCs is a key event in recovery of the dark state of rod photoreceptors following light exposure. May be involved in cone photoreceptor response and recovery of response in bright light. The chain is Guanylyl cyclase-activating protein 2 (GUCA1B) from Homo sapiens (Human).